The sequence spans 425 residues: Synaptotagmin-4 (425 aa).

Topologically, residues Met1–Thr16 are vesicular. Residues Val17–Cys37 traverse the membrane as a helical segment. Over Cys38 to Gly425 the chain is Cytoplasmic. Disordered stretches follow at residues Asn102 to Val121 and Phe126 to Ser147. A compositionally biased stretch (polar residues) spans Phe105–Glu119. Ser135 carries the phosphoserine; by MAPK8 modification. Residues Glu137 to Thr146 are compositionally biased toward low complexity. 2 C2 domains span residues Lys153 to Thr274 and Gly287 to His420. Ca(2+)-binding residues include Asp246, Ser249, and Asp252.

This sequence belongs to the synaptotagmin family. Interacts with KIF1A; the interaction increases in presence of calcium and decreases when SYT4 is phosphorylated at Ser-135. It depends on Ca(2+) as a cofactor. Phosphorylation at Ser-135 by MAPK8/JNK1 reduces interaction with KIF1A and neuronal dense core vesicles mobility. Widely expressed. Expressed in the brain. Expressed in pituitary gland, cerebellum, cortex, hypothalamus and hippocampus.

The protein resides in the cytoplasmic vesicle. Its subcellular location is the secretory vesicle. It localises to the neuronal dense core vesicle membrane. Its function is as follows. Synaptotagmin family member which does not bind Ca(2+). Involved in neuronal dense core vesicles (DCVs) mobility through its interaction with KIF1A. Upon increased neuronal activity, phosphorylation by MAPK8/JNK1 destabilizes the interaction with KIF1A and captures DCVs to synapses. Plays a role in dendrite formation by melanocytes. In Rattus norvegicus (Rat), this protein is Synaptotagmin-4 (Syt4).